A 607-amino-acid chain; its full sequence is Dolichyl-diphosphooligosaccharide--protein glycosyltransferase subunit 1 (607 aa).

Positions 1-23 are cleaved as a signal peptide; sequence MEAPAARLFLLLLLGTWAPAPGS. Over 24–434 the chain is Lumenal; sequence ASSEAPPLIN…VVHYTFNKVL (411 aa). The residue at position 187 (lysine 187) is an N6-acetyllysine. An N-linked (GlcNAc...) asparagine glycan is attached at asparagine 299. A helical transmembrane segment spans residues 435 to 455; it reads MLQEPLLVVAAFYILFFTVII. Over 456 to 607 the chain is Cytoplasmic; the sequence is YVRLDFSITK…TKIDHILDAL (152 aa). Lysine 538 is modified (N6-acetyllysine; alternate). A Glycyl lysine isopeptide (Lys-Gly) (interchain with G-Cter in SUMO2); alternate cross-link involves residue lysine 538.

This sequence belongs to the OST1 family. As to quaternary structure, component of the oligosaccharyltransferase (OST) complex. OST exists in two different complex forms which contain common core subunits RPN1, RPN2, OST48, OST4, DAD1 and TMEM258, either STT3A or STT3B as catalytic subunits, and form-specific accessory subunits. STT3A complex assembly occurs through the formation of 3 subcomplexes. Subcomplex 1 contains RPN1 and TMEM258, subcomplex 2 contains the STT3A-specific subunits STT3A, DC2/OSTC, and KCP2 as well as the core subunit OST4, and subcomplex 3 contains RPN2, DAD1, and OST48. The STT3A complex can form stable complexes with the Sec61 complex or with both the Sec61 and TRAP complexes. Interacts with TMEM35A/NACHO. In terms of processing, ubiquitinated by the ECS(ASB11) complex. Post-translationally, ufmylated by UFL1 in response to endoplasmic reticulum stress, promoting reticulophagy of endoplasmic reticulum sheets.

It is found in the endoplasmic reticulum membrane. The protein operates within protein modification; protein glycosylation. In terms of biological role, subunit of the oligosaccharyl transferase (OST) complex that catalyzes the initial transfer of a defined glycan (Glc(3)Man(9)GlcNAc(2) in eukaryotes) from the lipid carrier dolichol-pyrophosphate to an asparagine residue within an Asn-X-Ser/Thr consensus motif in nascent polypeptide chains, the first step in protein N-glycosylation. N-glycosylation occurs cotranslationally and the complex associates with the Sec61 complex at the channel-forming translocon complex that mediates protein translocation across the endoplasmic reticulum (ER). All subunits are required for a maximal enzyme activity. The protein is Dolichyl-diphosphooligosaccharide--protein glycosyltransferase subunit 1 of Pongo abelii (Sumatran orangutan).